The following is a 179-amino-acid chain: Large ribosomal subunit protein uL6 (179 aa).

The protein belongs to the universal ribosomal protein uL6 family. As to quaternary structure, part of the 50S ribosomal subunit.

This protein binds to the 23S rRNA, and is important in its secondary structure. It is located near the subunit interface in the base of the L7/L12 stalk, and near the tRNA binding site of the peptidyltransferase center. The sequence is that of Large ribosomal subunit protein uL6 from Geotalea uraniireducens (strain Rf4) (Geobacter uraniireducens).